The chain runs to 268 residues: Thiazole synthase (268 aa).

Lys-96 serves as the catalytic Schiff-base intermediate with DXP. 1-deoxy-D-xylulose 5-phosphate-binding positions include Gly-157, 185–186 (AG), and 207–208 (NT). The segment at 238-268 (PMRPREAASPSSPVEGVPFTPTGPRPGRGPQ) is disordered. The segment covering 258 to 268 (PTGPRPGRGPQ) has biased composition (pro residues).

It belongs to the ThiG family. Homotetramer. Forms heterodimers with either ThiH or ThiS.

Its subcellular location is the cytoplasm. It catalyses the reaction [ThiS sulfur-carrier protein]-C-terminal-Gly-aminoethanethioate + 2-iminoacetate + 1-deoxy-D-xylulose 5-phosphate = [ThiS sulfur-carrier protein]-C-terminal Gly-Gly + 2-[(2R,5Z)-2-carboxy-4-methylthiazol-5(2H)-ylidene]ethyl phosphate + 2 H2O + H(+). The protein operates within cofactor biosynthesis; thiamine diphosphate biosynthesis. In terms of biological role, catalyzes the rearrangement of 1-deoxy-D-xylulose 5-phosphate (DXP) to produce the thiazole phosphate moiety of thiamine. Sulfur is provided by the thiocarboxylate moiety of the carrier protein ThiS. In vitro, sulfur can be provided by H(2)S. The sequence is that of Thiazole synthase from Thermus thermophilus (strain ATCC 27634 / DSM 579 / HB8).